The sequence spans 336 residues: Anthranilate phosphoribosyltransferase (336 aa).

5-phospho-alpha-D-ribose 1-diphosphate contacts are provided by residues Gly79, 82–83 (GD), Thr87, 89–92 (NIST), 107–115 (KHGNRCVSS), and Ala119. An anthranilate-binding site is contributed by Gly79. Residue Ser91 participates in Mg(2+) binding. Asn110 lines the anthranilate pocket. Arg165 contacts anthranilate. 2 residues coordinate Mg(2+): Asp224 and Glu225.

It belongs to the anthranilate phosphoribosyltransferase family. In terms of assembly, homodimer. Requires Mg(2+) as cofactor.

The enzyme catalyses N-(5-phospho-beta-D-ribosyl)anthranilate + diphosphate = 5-phospho-alpha-D-ribose 1-diphosphate + anthranilate. It participates in amino-acid biosynthesis; L-tryptophan biosynthesis; L-tryptophan from chorismate: step 2/5. Functionally, catalyzes the transfer of the phosphoribosyl group of 5-phosphorylribose-1-pyrophosphate (PRPP) to anthranilate to yield N-(5'-phosphoribosyl)-anthranilate (PRA). This Lachnoclostridium phytofermentans (strain ATCC 700394 / DSM 18823 / ISDg) (Clostridium phytofermentans) protein is Anthranilate phosphoribosyltransferase.